A 195-amino-acid polypeptide reads, in one-letter code: Imidazoleglycerol-phosphate dehydratase (195 aa).

Belongs to the imidazoleglycerol-phosphate dehydratase family.

It localises to the cytoplasm. It carries out the reaction D-erythro-1-(imidazol-4-yl)glycerol 3-phosphate = 3-(imidazol-4-yl)-2-oxopropyl phosphate + H2O. It participates in amino-acid biosynthesis; L-histidine biosynthesis; L-histidine from 5-phospho-alpha-D-ribose 1-diphosphate: step 6/9. In Cupriavidus metallidurans (strain ATCC 43123 / DSM 2839 / NBRC 102507 / CH34) (Ralstonia metallidurans), this protein is Imidazoleglycerol-phosphate dehydratase.